We begin with the raw amino-acid sequence, 205 residues long: MTTDFLFPKIADCSYVSCYCEENVWKLCEQVKRTRPEELSKCYAVFVSNEGRTVPLWRQKAGRGDDQVVIWDYHVFFIHNPLLNRCLVFDLDTTLPFPTYFHKYVTETFRSDLALRPEHHRFFRVIPADTYLIEFSSDRRHMRRPDGSWIKPPPSYPPILSNSNMHCLGDFICMSAGKGPGAVYSLSEFVQNFYKSPHVMAQNNK.

Active-site residues include cysteine 20, histidine 74, and aspartate 90.

It belongs to the NTAQ1 family. As to quaternary structure, monomer.

The catalysed reaction is N-terminal L-glutaminyl-[protein] + H2O = N-terminal L-glutamyl-[protein] + NH4(+). Mediates the side-chain deamidation of N-terminal glutamine residues to glutamate, an important step in N-end rule pathway of protein degradation. Conversion of the resulting N-terminal glutamine to glutamate renders the protein susceptible to arginylation, polyubiquitination and degradation as specified by the N-end rule. Does not act on substrates with internal or C-terminal glutamine and does not act on non-glutamine residues in any position. In Drosophila erecta (Fruit fly), this protein is Protein N-terminal glutamine amidohydrolase (tun).